A 234-amino-acid chain; its full sequence is Leucyl/phenylalanyl-tRNA--protein transferase (234 aa).

This sequence belongs to the L/F-transferase family.

The protein localises to the cytoplasm. The enzyme catalyses N-terminal L-lysyl-[protein] + L-leucyl-tRNA(Leu) = N-terminal L-leucyl-L-lysyl-[protein] + tRNA(Leu) + H(+). It catalyses the reaction N-terminal L-arginyl-[protein] + L-leucyl-tRNA(Leu) = N-terminal L-leucyl-L-arginyl-[protein] + tRNA(Leu) + H(+). The catalysed reaction is L-phenylalanyl-tRNA(Phe) + an N-terminal L-alpha-aminoacyl-[protein] = an N-terminal L-phenylalanyl-L-alpha-aminoacyl-[protein] + tRNA(Phe). Functions in the N-end rule pathway of protein degradation where it conjugates Leu, Phe and, less efficiently, Met from aminoacyl-tRNAs to the N-termini of proteins containing an N-terminal arginine or lysine. The polypeptide is Leucyl/phenylalanyl-tRNA--protein transferase (Escherichia coli O157:H7 (strain EC4115 / EHEC)).